The chain runs to 502 residues: Probable cytosol aminopeptidase (502 aa).

2 residues coordinate Mn(2+): lysine 269 and aspartate 274. Residue lysine 281 is part of the active site. Mn(2+) is bound by residues aspartate 292, aspartate 351, and glutamate 353. Arginine 355 is an active-site residue.

This sequence belongs to the peptidase M17 family. Requires Mn(2+) as cofactor.

Its subcellular location is the cytoplasm. The catalysed reaction is Release of an N-terminal amino acid, Xaa-|-Yaa-, in which Xaa is preferably Leu, but may be other amino acids including Pro although not Arg or Lys, and Yaa may be Pro. Amino acid amides and methyl esters are also readily hydrolyzed, but rates on arylamides are exceedingly low.. It catalyses the reaction Release of an N-terminal amino acid, preferentially leucine, but not glutamic or aspartic acids.. Presumably involved in the processing and regular turnover of intracellular proteins. Catalyzes the removal of unsubstituted N-terminal amino acids from various peptides. In Shewanella denitrificans (strain OS217 / ATCC BAA-1090 / DSM 15013), this protein is Probable cytosol aminopeptidase.